Consider the following 235-residue polypeptide: tRNA pseudouridine synthase B (235 aa).

The active-site Nucleophile is D45.

This sequence belongs to the pseudouridine synthase TruB family. Type 1 subfamily.

The catalysed reaction is uridine(55) in tRNA = pseudouridine(55) in tRNA. Its function is as follows. Responsible for synthesis of pseudouridine from uracil-55 in the psi GC loop of transfer RNAs. In Chlamydia pneumoniae (Chlamydophila pneumoniae), this protein is tRNA pseudouridine synthase B.